Consider the following 520-residue polypeptide: Anthranilate synthase component 1 (520 aa).

Residues Ser40 and 291–293 (PYM) each bind L-tryptophan. 328 to 329 (GT) serves as a coordination point for chorismate. Glu361 provides a ligand contact to Mg(2+). Chorismate is bound by residues Tyr449, Arg469, 483–485 (GAG), and Gly485. Glu498 lines the Mg(2+) pocket.

It belongs to the anthranilate synthase component I family. In terms of assembly, heterotetramer consisting of two non-identical subunits: a beta subunit (TrpG) and a large alpha subunit (TrpE). Requires Mg(2+) as cofactor.

It catalyses the reaction chorismate + L-glutamine = anthranilate + pyruvate + L-glutamate + H(+). Its pathway is amino-acid biosynthesis; L-tryptophan biosynthesis; L-tryptophan from chorismate: step 1/5. Its activity is regulated as follows. Feedback inhibited by tryptophan. In terms of biological role, part of a heterotetrameric complex that catalyzes the two-step biosynthesis of anthranilate, an intermediate in the biosynthesis of L-tryptophan. In the first step, the glutamine-binding beta subunit (TrpG) of anthranilate synthase (AS) provides the glutamine amidotransferase activity which generates ammonia as a substrate that, along with chorismate, is used in the second step, catalyzed by the large alpha subunit of AS (TrpE) to produce anthranilate. In the absence of TrpG, TrpE can synthesize anthranilate directly from chorismate and high concentrations of ammonia. This is Anthranilate synthase component 1 (trpE) from Buchnera aphidicola subsp. Pemphigus spyrothecae.